Consider the following 1348-residue polypeptide: Putative late blight resistance protein homolog R1B-12 (1348 aa).

Coiled-coil stretches lie at residues 446 to 469 (RYSD…ESLQ) and 561 to 583 (PRMN…KLLN). The 297-residue stretch at 552–848 (RTSSQLTRTP…ISESFIKSCE (297 aa)) folds into the NB-ARC domain. An ATP-binding site is contributed by 595-602 (GMPGLGKT). LRR repeat units lie at residues 977 to 1001 (FKFL…LLYL), 1051 to 1074 (LRHL…SAKL), 1123 to 1147 (PITL…ISAQ), 1151 to 1170 (YLKL…TADH), 1171 to 1194 (LKHL…EVSN), 1197 to 1219 (FPQL…ADDA), 1220 to 1244 (FPNL…FMDI), and 1309 to 1332 (LPGI…DMDA). The HMA domain maps to 1284-1348 (VKKMVLKFDT…VGKLINRGML (65 aa)).

This sequence belongs to the disease resistance NB-LRR family.

It is found in the cytoplasm. The protein localises to the membrane. Confers resistance to late blight (Phytophthora infestans) races carrying the avirulence gene Avr1. Resistance proteins guard the plant against pathogens that contain an appropriate avirulence protein via an indirect interaction with this avirulence protein. That triggers a defense system including the hypersensitive response, which restricts the pathogen growth. The sequence is that of Putative late blight resistance protein homolog R1B-12 (R1B-12) from Solanum demissum (Wild potato).